The sequence spans 161 residues: Anaerobic nitrite reductase GLB1 (161 aa).

Residues 9 to 157 (VFTEEQEALV…LVAAIKSEMK (149 aa)) enclose the Globin domain. Positions 42-46 (EIAPS) match the Homodimerization motif. Heme b-binding residues include Ser52, Lys66, His70, Arg100, and His105. Residues 112–123 (NEHFETRFALLE) carry the Homodimerization motif.

This sequence belongs to the plant globin family. As to quaternary structure, homodimer. The cofactor is heme b. Root specific.

Its subcellular location is the cytoplasm. It is found in the nucleus. The enzyme catalyses Fe(III)-heme b-[protein] + nitric oxide + H2O = Fe(II)-heme b-[protein] + nitrite + 2 H(+). Its function is as follows. Phytoglobin that reduces nitrite to nitric oxide (NO) under anoxic conditions (e.g. during flooding or in waterlogged soil) and upon root nodulation. Required for general plant development and during nodulation, especially for the onset of symbiosis. Monitors nitric oxide (NO) levels during early phase of the nitrogen-fixing symbiosis and buffers oxygen in functioning nodules. May not function as an oxygen storage or transport protein. Has an unusually high affinity for O(2) through a hexacoordinate heme iron because of a very low dissociation constant. The protein is Anaerobic nitrite reductase GLB1 (GLB1) of Trema tomentosum (Peach-leaf poison-bush).